Consider the following 831-residue polypeptide: DNA ligase (831 aa).

NAD(+)-binding positions include 34-38 (DADYD), 83-84 (SL), and Glu-114. Lys-116 (N6-AMP-lysine intermediate) is an active-site residue. Positions 137, 174, 291, and 315 each coordinate NAD(+). Residues Cys-409, Cys-412, Cys-427, and Cys-433 each contribute to the Zn(2+) site. The region spanning 749–831 (AHTAPLNGQS…LAFLEQYSAQ (83 aa)) is the BRCT domain.

Belongs to the NAD-dependent DNA ligase family. LigA subfamily. Requires Mg(2+) as cofactor. Mn(2+) is required as a cofactor.

The catalysed reaction is NAD(+) + (deoxyribonucleotide)n-3'-hydroxyl + 5'-phospho-(deoxyribonucleotide)m = (deoxyribonucleotide)n+m + AMP + beta-nicotinamide D-nucleotide.. DNA ligase that catalyzes the formation of phosphodiester linkages between 5'-phosphoryl and 3'-hydroxyl groups in double-stranded DNA using NAD as a coenzyme and as the energy source for the reaction. It is essential for DNA replication and repair of damaged DNA. The sequence is that of DNA ligase from Xylella fastidiosa (strain M23).